Reading from the N-terminus, the 384-residue chain is 8-amino-7-oxononanoate synthase (384 aa).

Arg23 serves as a coordination point for substrate. Gly110 to Phe111 contributes to the pyridoxal 5'-phosphate binding site. Position 135 (His135) interacts with substrate. Pyridoxal 5'-phosphate-binding residues include Ser179, His206, and Thr232. Lys235 is subject to N6-(pyridoxal phosphate)lysine. Thr348 provides a ligand contact to substrate.

The protein belongs to the class-II pyridoxal-phosphate-dependent aminotransferase family. BioF subfamily. Homodimer. The cofactor is pyridoxal 5'-phosphate.

The enzyme catalyses 6-carboxyhexanoyl-[ACP] + L-alanine + H(+) = (8S)-8-amino-7-oxononanoate + holo-[ACP] + CO2. Its pathway is cofactor biosynthesis; biotin biosynthesis. Functionally, catalyzes the decarboxylative condensation of pimeloyl-[acyl-carrier protein] and L-alanine to produce 8-amino-7-oxononanoate (AON), [acyl-carrier protein], and carbon dioxide. The sequence is that of 8-amino-7-oxononanoate synthase from Vibrio cholerae serotype O1 (strain ATCC 39315 / El Tor Inaba N16961).